We begin with the raw amino-acid sequence, 146 residues long: Hemoglobin subunit beta (146 aa).

In terms of domain architecture, Globin spans 2–146 (QWAAEEKQLI…VAHALARKYH (145 aa)). Residues histidine 63 and histidine 92 each contribute to the heme b site.

Belongs to the globin family. As to quaternary structure, heterotetramer of two alpha chains and two beta chains. In terms of tissue distribution, red blood cells.

Involved in oxygen transport from the lung to the various peripheral tissues. The protein is Hemoglobin subunit beta (HBB) of Accipiter gentilis (Northern goshawk).